The following is a 965-amino-acid chain: Aminopeptidase N (965 aa).

Residues 2–8 (AKGFYIS) lie on the Cytoplasmic side of the membrane. The chain crosses the membrane as a helical; Signal-anchor for type II membrane protein span at residues 9–32 (KTLGILGILLGVAAVCTIIALSVV). Residues 33–68 (YAQEKNRNAENSAIAPTLPGSTSATTSTTNPAIDES) form a cytosolic Ser/Thr-rich junction region. Over 33–965 (YAQEKNRNAE…VVLKWFTENS (933 aa)) the chain is Extracellular. The interval 44 to 68 (SAIAPTLPGSTSATTSTTNPAIDES) is disordered. The span at 47-64 (APTLPGSTSATTSTTNPA) shows a compositional bias: low complexity. Residues 69–965 (KPWNQYRLPK…VVLKWFTENS (897 aa)) form a metalloprotease region. N-linked (GlcNAc...) asparagine glycosylation is found at asparagine 114 and asparagine 128. Tyrosine 176 is subject to Sulfotyrosine. Asparagine 234, asparagine 242, and asparagine 264 each carry an N-linked (GlcNAc...) asparagine glycan. 351 to 355 (GAMEN) contributes to the substrate binding site. Histidine 387 contributes to the Zn(2+) binding site. Glutamate 388 acts as the Proton acceptor in catalysis. The Zn(2+) site is built by histidine 391 and glutamate 410. N-linked (GlcNAc...) asparagine glycosylation is found at asparagine 555, asparagine 606, and asparagine 624. Cysteine 760 and cysteine 767 are disulfide-bonded. Asparagine 780 carries an N-linked (GlcNAc...) asparagine glycan. A disulfide bridge connects residues cysteine 797 and cysteine 833. Tyrosine 852 bears the Phosphotyrosine mark.

The protein belongs to the peptidase M1 family. As to quaternary structure, homodimer. Interacts with SLC6A19. It depends on Zn(2+) as a cofactor. Sulfated. In terms of processing, N- and O-glycosylated. Post-translationally, may undergo proteolysis and give rise to a soluble form. As to expression, widely distributed throughout the CNS. Particularly abundant in kidney and intestinal microvilli, also detected in lung and liver. Weakly expressed in heart and aorta.

The protein localises to the cell membrane. It carries out the reaction Release of an N-terminal amino acid, Xaa-|-Yaa- from a peptide, amide or arylamide. Xaa is preferably Ala, but may be most amino acids including Pro (slow action). When a terminal hydrophobic residue is followed by a prolyl residue, the two may be released as an intact Xaa-Pro dipeptide.. Functionally, broad specificity aminopeptidase which plays a role in the final digestion of peptides generated from hydrolysis of proteins by gastric and pancreatic proteases. Also involved in the processing of various peptides including peptide hormones, such as angiotensin III and IV, neuropeptides, and chemokines. May also be involved the cleavage of peptides bound to major histocompatibility complex class II molecules of antigen presenting cells. May have a role in angiogenesis and promote cholesterol crystallization. May have a role in amino acid transport by acting as binding partner of amino acid transporter SLC6A19 and regulating its activity. The chain is Aminopeptidase N (Anpep) from Rattus norvegicus (Rat).